A 276-amino-acid chain; its full sequence is Small ribosomal subunit protein uS3 (276 aa).

A KH type-2 domain is found at 39–110 (IRRETMKFLK…KINIKIKEIK (72 aa)).

Belongs to the universal ribosomal protein uS3 family. Part of the 30S ribosomal subunit. Forms a tight complex with proteins S10 and S14.

Functionally, binds the lower part of the 30S subunit head. Binds mRNA in the 70S ribosome, positioning it for translation. The protein is Small ribosomal subunit protein uS3 of Borrelia turicatae (strain 91E135).